Reading from the N-terminus, the 238-residue chain is ATP synthase subunit a (238 aa).

Transmembrane regions (helical) follow at residues 18-38, 76-96, 117-137, 173-193, and 208-230; these read GTTM…TVIG, FIVL…MGIP, VLTL…GIMV, LFGN…LGTT, and WQAF…AMVY.

This sequence belongs to the ATPase A chain family. As to quaternary structure, F-type ATPases have 2 components, CF(1) - the catalytic core - and CF(0) - the membrane proton channel. CF(1) has five subunits: alpha(3), beta(3), gamma(1), delta(1), epsilon(1). CF(0) has three main subunits: a(1), b(2) and c(9-12). The alpha and beta chains form an alternating ring which encloses part of the gamma chain. CF(1) is attached to CF(0) by a central stalk formed by the gamma and epsilon chains, while a peripheral stalk is formed by the delta and b chains.

It is found in the cell membrane. In terms of biological role, key component of the proton channel; it plays a direct role in the translocation of protons across the membrane. This Shouchella clausii (strain KSM-K16) (Alkalihalobacillus clausii) protein is ATP synthase subunit a.